The sequence spans 123 residues: uncharacterized protein (123 aa).

The chain crosses the membrane as a helical span at residues 14 to 34; sequence VVLKITAVVCSVFSIRVLILA.

The protein resides in the membrane. This is an uncharacterized protein from Saccharomyces cerevisiae (strain ATCC 204508 / S288c) (Baker's yeast).